A 173-amino-acid polypeptide reads, in one-letter code: MTVSFPPPSTSEPSREEQARALCLRLLTARSRTRAELAGQLAKRGYPEDVGDRVLDRLTAVGLVDDADFAADWVQSRRANAGKSRRALAAELQAKGVDQDVIGTALAGLDAGAERGRAEQLVRTKLRREKLTEDDARVTRRLVAMLARRGYSQTVACEVVIAELAAERDRRRV.

This sequence belongs to the RecX family.

It localises to the cytoplasm. In terms of biological role, modulates RecA activity. This chain is Regulatory protein RecX, found in Mycobacterium marinum (strain ATCC BAA-535 / M).